A 203-amino-acid polypeptide reads, in one-letter code: Sarcosine oxidase subunit gamma (203 aa).

It belongs to the SoxG family. Heterotetramer composed of subunits alpha (SoxA), beta (SoxB), gamma (SoxG) and delta (SoxD).

The protein localises to the cytoplasm. The enzyme catalyses sarcosine + (6S)-5,6,7,8-tetrahydrofolate + O2 = (6R)-5,10-methylene-5,6,7,8-tetrahydrofolate + glycine + H2O2. It catalyses the reaction sarcosine + O2 + H2O = formaldehyde + glycine + H2O2. Its function is as follows. In the presence of tetrahydrofolate, catalyzes the oxidative demethylation of sarcosine to yield glycine, 5,10-methylenetetrahydrofolate and hydrogen peroxide. In the absence of tetrahydrofolate, catalyzes the oxidative demethylation of sarcosine to yield glycine, formaldehyde and hydrogen peroxide. In Corynebacterium sp. (strain P-1), this protein is Sarcosine oxidase subunit gamma.